We begin with the raw amino-acid sequence, 281 residues long: 4-diphosphocytidyl-2-C-methyl-D-erythritol kinase (281 aa).

Residue Lys11 is part of the active site. Position 92–102 (92–102) interacts with ATP; it reads LVSAGLAGGSA. Asp132 is a catalytic residue.

This sequence belongs to the GHMP kinase family. IspE subfamily.

It catalyses the reaction 4-CDP-2-C-methyl-D-erythritol + ATP = 4-CDP-2-C-methyl-D-erythritol 2-phosphate + ADP + H(+). Its pathway is isoprenoid biosynthesis; isopentenyl diphosphate biosynthesis via DXP pathway; isopentenyl diphosphate from 1-deoxy-D-xylulose 5-phosphate: step 3/6. Its function is as follows. Catalyzes the phosphorylation of the position 2 hydroxy group of 4-diphosphocytidyl-2C-methyl-D-erythritol. In Ehrlichia ruminantium (strain Welgevonden), this protein is 4-diphosphocytidyl-2-C-methyl-D-erythritol kinase.